A 446-amino-acid polypeptide reads, in one-letter code: Tryptophan dimethylallyltransferase (446 aa).

Residues 83–84 (IL) and Glu-92 contribute to the L-tryptophan site. Arg-103, Lys-189, and Tyr-191 together coordinate substrate. Tyr-193 and Arg-246 together coordinate L-tryptophan. Substrate contacts are provided by Arg-259, Lys-261, Tyr-263, Gln-345, and Tyr-347.

This sequence belongs to the tryptophan dimethylallyltransferase family. In terms of assembly, homodimer.

It catalyses the reaction L-tryptophan + dimethylallyl diphosphate = 4-(3-methylbut-2-enyl)-L-tryptophan + diphosphate. It participates in alkaloid biosynthesis; ergot alkaloid biosynthesis. Its function is as follows. Tryptophan dimethylallyltransferase; part of the gene cluster that mediates the biosynthesis of fungal ergot alkaloid. DmaW catalyzes the first step of ergot alkaloid biosynthesis by condensing dimethylallyl diphosphate (DMAP) and tryptophan to form 4-dimethylallyl-L-tryptophan. The second step is catalyzed by the methyltransferase easF that methylates 4-dimethylallyl-L-tryptophan in the presence of S-adenosyl-L-methionine, resulting in the formation of 4-dimethylallyl-L-abrine. The catalase easC and the FAD-dependent oxidoreductase easE then transform 4-dimethylallyl-L-abrine to chanoclavine-I which is further oxidized by easD in the presence of NAD(+), resulting in the formation of chanoclavine-I aldehyde. Chanoclavine-I aldehyde is the precursor of ergoamides and ergopeptines in Clavicipitaceae, and clavine-type alcaloids such as fumiclavine in Trichocomaceae. However, the metabolites downstream of chanoclavine-I aldehyde in Arthrodermataceae have not been identified yet. The protein is Tryptophan dimethylallyltransferase of Arthroderma otae (strain ATCC MYA-4605 / CBS 113480) (Microsporum canis).